A 146-amino-acid chain; its full sequence is 3-dehydroquinate dehydratase (146 aa).

The Proton acceptor role is filled by Y22. Substrate is bound by residues N74, H80, and D87. The Proton donor role is filled by H100. Residues 101–102 (LS) and R111 each bind substrate.

The protein belongs to the type-II 3-dehydroquinase family. Homododecamer.

The enzyme catalyses 3-dehydroquinate = 3-dehydroshikimate + H2O. The protein operates within metabolic intermediate biosynthesis; chorismate biosynthesis; chorismate from D-erythrose 4-phosphate and phosphoenolpyruvate: step 3/7. Catalyzes a trans-dehydration via an enolate intermediate. This chain is 3-dehydroquinate dehydratase, found in Clostridium perfringens (strain SM101 / Type A).